The primary structure comprises 368 residues: ATP-dependent (S)-NAD(P)H-hydrate dehydratase (368 aa).

Residues 13-357 (LFKKVRKIVP…DEVHESFLEL (345 aa)) enclose the YjeF C-terminal domain. (6S)-NADPHX contacts are provided by residues Gly-125 and 178–184 (NVNEFSR). ATP is bound by residues 231 to 235 (KGPHD) and 250 to 259 (GGLKRSGGQG). Position 260 (Asp-260) interacts with (6S)-NADPHX.

The protein belongs to the NnrD/CARKD family. Requires Mg(2+) as cofactor.

The protein localises to the cytoplasm. It carries out the reaction (6S)-NADHX + ATP = ADP + phosphate + NADH + H(+). The enzyme catalyses (6S)-NADPHX + ATP = ADP + phosphate + NADPH + H(+). In terms of biological role, catalyzes the dehydration of the S-form of NAD(P)HX at the expense of ATP, which is converted to ADP. Together with NAD(P)HX epimerase, which catalyzes the epimerization of the S- and R-forms, the enzyme allows the repair of both epimers of NAD(P)HX, a damaged form of NAD(P)H that is a result of enzymatic or heat-dependent hydration. The polypeptide is ATP-dependent (S)-NAD(P)H-hydrate dehydratase (Aspergillus fumigatus (strain ATCC MYA-4609 / CBS 101355 / FGSC A1100 / Af293) (Neosartorya fumigata)).